The sequence spans 474 residues: Polyamine oxidase 7 (474 aa).

A signal peptide spans 1 to 27; it reads MTKPTTMAIFLSIVLLSMAQLPSLVAG. Residues Glu61 and Arg69 each coordinate FAD. N-linked (GlcNAc...) asparagine glycans are attached at residues Asn103 and Asn150. Val261 provides a ligand contact to FAD. Residue Asn278 is glycosylated (N-linked (GlcNAc...) asparagine). Glu454 contributes to the FAD binding site.

The protein belongs to the flavin monoamine oxidase family. It depends on FAD as a cofactor.

The protein resides in the secreted. Its subcellular location is the extracellular space. It is found in the apoplast. The catalysed reaction is spermine + O2 + H2O = 3-aminopropanal + spermidine + H2O2. It catalyses the reaction N(1)-acetylspermine + O2 + H2O = 3-acetamidopropanal + spermidine + H2O2. The enzyme catalyses norspermine + O2 + H2O = norspermidine + 3-aminopropanal + H2O2. It carries out the reaction spermidine + O2 + H2O = 3-aminopropanal + putrescine + H2O2. The catalysed reaction is N(1)-acetylspermidine + O2 + H2O = 3-acetamidopropanal + putrescine + H2O2. It catalyses the reaction thermospermine + O2 + H2O = 3-aminopropanal + spermidine + H2O2. It participates in amine and polyamine degradation; spermidine degradation. The protein operates within amine and polyamine degradation; spermine degradation. Flavoenzyme involved in polyamine back-conversion. Catalyzes the oxidation of the secondary amino group of polyamines, such as spermine, spermidine and their acetyl derivatives. Substrate preference is spermine &gt; spermidine &gt; N(1)-acetylspermine &gt; N(1)-acetylspermidine &gt; norspermine &gt; thermospermine. No activity detected when putrescine is used as substrate. May play a role in producing hydrogen peroxide for secondary wall thickening through lignin formation during anther development. The polypeptide is Polyamine oxidase 7 (Oryza sativa subsp. japonica (Rice)).